The primary structure comprises 450 residues: Glutamyl-tRNA(Gln) amidotransferase subunit A, mitochondrial (450 aa).

Active-site charge relay system residues include Lys47 and Ser122. Residue Ser146 is the Acyl-ester intermediate of the active site.

The protein belongs to the amidase family. GatA subfamily. In terms of assembly, subunit of the heterotrimeric GatFAB amidotransferase (AdT) complex, composed of A, B and F subunits.

The protein localises to the mitochondrion. It catalyses the reaction L-glutamyl-tRNA(Gln) + L-glutamine + ATP + H2O = L-glutaminyl-tRNA(Gln) + L-glutamate + ADP + phosphate + H(+). Functionally, allows the formation of correctly charged Gln-tRNA(Gln) through the transamidation of misacylated Glu-tRNA(Gln) in the mitochondria. The reaction takes place in the presence of glutamine and ATP through an activated gamma-phospho-Glu-tRNA(Gln). In Candida albicans (strain SC5314 / ATCC MYA-2876) (Yeast), this protein is Glutamyl-tRNA(Gln) amidotransferase subunit A, mitochondrial.